The chain runs to 271 residues: Tryptophan synthase alpha chain (271 aa).

Residues glutamate 49 and aspartate 60 each act as proton acceptor in the active site.

Belongs to the TrpA family. In terms of assembly, tetramer of two alpha and two beta chains.

The enzyme catalyses (1S,2R)-1-C-(indol-3-yl)glycerol 3-phosphate + L-serine = D-glyceraldehyde 3-phosphate + L-tryptophan + H2O. It participates in amino-acid biosynthesis; L-tryptophan biosynthesis; L-tryptophan from chorismate: step 5/5. The alpha subunit is responsible for the aldol cleavage of indoleglycerol phosphate to indole and glyceraldehyde 3-phosphate. The polypeptide is Tryptophan synthase alpha chain (Burkholderia cenocepacia (strain ATCC BAA-245 / DSM 16553 / LMG 16656 / NCTC 13227 / J2315 / CF5610) (Burkholderia cepacia (strain J2315))).